Here is a 660-residue protein sequence, read N- to C-terminus: MGLQTTKWPSHGAFFLKSWLIISLGLYSQVSKLLACPSVCRCDRNFVYCNERSLTSVPLGIPEGVTVLYLHNNQINNAGFPAELHNVQSVHTVYLYGNQLDEFPMNLPKNVRVLHLQENNIQTISRAALAQLLKLEELHLDDNSISTVGVEDGAFREAISLKLLFLSKNHLSSVPVGLPVDLQELRVDENRIAVISDMAFQNLTSLERLIVDGNLLTNKGIAEGTFSHLTKLKEFSIVRNSLSHPPPDLPGTHLIRLYLQDNQINHIPLTAFSNLRKLERLDISNNQLRMLTQGVFDNLSNLKQLTARNNPWFCDCSIKWVTEWLKYIPSSLNVRGFMCQGPEQVRGMAVRELNMNLLSCPTTTPGLPLFTPAPSTASPTTQPPTLSIPNPSRSYTPPTPTTSKLPTIPDWDGRERVTPPISERIQLSIHFVNDTSIQVSWLSLFTVMAYKLTWVKMGHSLVGGIVQERIVSGEKQHLSLVNLEPRSTYRICLVPLDAFNYRAVEDTICSEATTHASYLNNGSNTASSHEQTTSHSMGSPFLLAGLIGGAVIFVLVVLLSVFCWHMHKKGRYTSQKWKYNRGRRKDDYCEAGTKKDNSILEMTETSFQIVSLNNDQLLKGDFRLQPIYTPNGGINYTDCHIPNNMRYCNSSVPDLEHCHT.

Positions 1–35 are cleaved as a signal peptide; the sequence is MGLQTTKWPSHGAFFLKSWLIISLGLYSQVSKLLA. Intrachain disulfides connect Cys-36/Cys-42 and Cys-40/Cys-49. An LRRNT domain is found at 36-63; that stretch reads CPSVCRCDRNFVYCNERSLTSVPLGIPE. At 36 to 541 the chain is on the extracellular side; sequence CPSVCRCDRN…TTSHSMGSPF (506 aa). LRR repeat units follow at residues 64–85, 89–109, 110–131, 134–155, 160–181, 182–202, 205–225, 231–252, 253–274, and 277–298; these read GVTV…AELH, SVHT…NLPK, NVRV…ALAQ, KLEE…DGAF, SLKL…LPVD, LQEL…AFQN, SLER…AEGT, KLKE…LPGT, HLIR…AFSN, and KLER…VFDN. N-linked (GlcNAc...) asparagine glycosylation is present at Asn-202. Residue Asn-298 is glycosylated (N-linked (GlcNAc...) asparagine). The 53-residue stretch at 310–362 folds into the LRRCT domain; sequence NPWFCDCSIKWVTEWLKYIPSSLNVRGFMCQGPEQVRGMAVRELNMNLLSCPT. Intrachain disulfides connect Cys-314-Cys-339 and Cys-316-Cys-360. Low complexity predominate over residues 373–409; the sequence is APSTASPTTQPPTLSIPNPSRSYTPPTPTTSKLPTIP. Positions 373–413 are disordered; it reads APSTASPTTQPPTLSIPNPSRSYTPPTPTTSKLPTIPDWDG. A Fibronectin type-III domain is found at 419–517; the sequence is PPISERIQLS…ICSEATTHAS (99 aa). Asn-433 and Asn-521 each carry an N-linked (GlcNAc...) asparagine glycan. A helical transmembrane segment spans residues 542–562; it reads LLAGLIGGAVIFVLVVLLSVF. Topologically, residues 563 to 660 are cytoplasmic; sequence CWHMHKKGRY…SVPDLEHCHT (98 aa).

Self-associates (via leucine-rich repeats), giving rise to homooligomers. Interacts with FGFR1. Interacts with FGFR2. Interacts (via extracellular domain) with ADGRL1/LPHN1. Interacts (via extracellular domain) with ADGRL3 (via olfactomedin-like domain). Interacts (via extracellular domain) with UNC5D (via the first Ig-like domain). Can also interact (via extracellular domain) with UNC5B, but with much lower affinity. Interacts (via extracellular domain) with FN1. N-glycosylated. In terms of processing, proteolytic cleavage in the juxtamembrane region gives rise to a soluble ectodomain. Cleavage is probably effected by a metalloprotease. In terms of tissue distribution, expressed in pancreas, skeletal muscle, brain, and heart.

The protein localises to the cell membrane. The protein resides in the endoplasmic reticulum membrane. Its subcellular location is the cell junction. It is found in the focal adhesion. It localises to the secreted. The protein localises to the extracellular space. The protein resides in the extracellular matrix. Its subcellular location is the microsome membrane. It is found in the synapse. It localises to the synaptosome. In terms of biological role, functions in cell-cell adhesion, cell migration and axon guidance. Mediates cell-cell adhesion via its interactions with ADGRL3 and probably also other latrophilins that are expressed at the surface of adjacent cells. May play a role in the migration of cortical neurons during brain development via its interaction with UNC5D. Mediates axon growth cone collapse and plays a repulsive role in neuron guidance via its interaction with UNC5D, and possibly also other UNC-5 family members. Plays a role in fibroblast growth factor-mediated signaling cascades. Required for normal organization of the cardiac basement membrane during embryogenesis, and for normal embryonic epicardium and heart morphogenesis. This is Leucine-rich repeat transmembrane protein FLRT2 (FLRT2) from Homo sapiens (Human).